Consider the following 48-residue polypeptide: Light-harvesting polypeptide B-885 beta-1 chain (48 aa).

The Cytoplasmic portion of the chain corresponds to 1–20 (AEDRKSLSGLTEQEAQEFGT). A helical membrane pass occupies residues 21-43 (LYTQGVAFVAVIAVVAHALVWAW). His-37 is an a bacteriochlorophyll binding site. At 44 to 48 (RPWLQ) the chain is on the periplasmic side.

The protein belongs to the antenna complex beta subunit family. The core complex is formed by different alpha and beta chains, binding bacteriochlorophyll molecules, and arranged most probably in tetrameric structures disposed around the reaction center. The non-pigmented gamma chains may constitute additional components.

It is found in the cell inner membrane. In terms of biological role, antenna complexes are light-harvesting systems, which transfer the excitation energy to the reaction centers. The protein is Light-harvesting polypeptide B-885 beta-1 chain of Rhodocyclus tenuis (Rhodospirillum tenue).